The primary structure comprises 114 residues: N(4)-acetylcytidine amidohydrolase (114 aa).

The 86-residue stretch at 8–93 (TFFEFLTPLV…ALIQEIYPNI (86 aa)) folds into the ASCH domain. Residue Lys22 is the Proton acceptor of the active site. Catalysis depends on Thr25, which acts as the Nucleophile. The active-site Proton donor is Glu75.

It belongs to the N(4)-acetylcytidine amidohydrolase family.

The catalysed reaction is N(4)-acetylcytidine + H2O = cytidine + acetate + H(+). It catalyses the reaction N(4)-acetyl-2'-deoxycytidine + H2O = 2'-deoxycytidine + acetate + H(+). It carries out the reaction N(4)-acetylcytosine + H2O = cytosine + acetate + H(+). Catalyzes the hydrolysis of N(4)-acetylcytidine (ac4C). This chain is N(4)-acetylcytidine amidohydrolase, found in Vibrio cholerae serotype O1 (strain ATCC 39541 / Classical Ogawa 395 / O395).